We begin with the raw amino-acid sequence, 62 residues long: Photosystem II reaction center protein Z (62 aa).

2 helical membrane-spanning segments follow: residues 8–28 (TLFAFVGLSFLLVVGVPVVFA) and 41–61 (FSGIGFWFLLVFAVGILNSFV).

This sequence belongs to the PsbZ family. As to quaternary structure, PSII is composed of 1 copy each of membrane proteins PsbA, PsbB, PsbC, PsbD, PsbE, PsbF, PsbH, PsbI, PsbJ, PsbK, PsbL, PsbM, PsbT, PsbY, PsbZ, Psb30/Ycf12, at least 3 peripheral proteins of the oxygen-evolving complex and a large number of cofactors. It forms dimeric complexes.

The protein resides in the plastid. Its subcellular location is the chloroplast thylakoid membrane. Functionally, may control the interaction of photosystem II (PSII) cores with the light-harvesting antenna, regulates electron flow through the 2 photosystem reaction centers. PSII is a light-driven water plastoquinone oxidoreductase, using light energy to abstract electrons from H(2)O, generating a proton gradient subsequently used for ATP formation. The polypeptide is Photosystem II reaction center protein Z (Tupiella akineta (Green alga)).